The following is a 1876-amino-acid chain: MTGSISGEADLRHWLIDYLVTNIGCTPDEVDPDLSLADLGVSSRDAVVLSGELSELLGRTVSPIDFWEHPTINALAAYLAAPEPSPDSDAAVKRGARNSLDEPIAVVGMGCRFPGGISCPEALWDFLCERRSSISQVPPQRWQPFEGGPPEVAAALARTTRWGSFLPDIDAFDAEFFEISPSEADKMDPQQRLLLEVAWEALEHAGIPPGTLRRSATGVFAGACLSEYGAMASADLSQVDGWSNSGGAMSIIANRLSYFLDLRGPSVAVDTACSSSLVAIHLACQSLRTQDCHLAIAAGVNLLLSPAVFRGFDQVGALSPTGQCRAFDATADGFVRGEGAGVVVLKRLTDAQRDGDRVLAVICGSAVNQDGRSNGLMAPNPAAQMAVLRAAYTNAGMQPSEVDYVEAHGTGTLLGDPIEARALGTVLGRGRPEDSPLLIGSVKTNLGHTEAAAGIAGFIKTVLAVQHGQIPPNQHFETANPHIPFTDLRMKVVDTQTEWPATGHPRRAGVSSFGFGGTNAHVVIEQGQEVRPAPGQGLSPAVSTLVVAGKTMQRVSATAGMLADWMEGPGADVALADVAHTLNHHRSRQPKFGTVVARDRTQAIAGLRALAAGQHAPGVVNPAEGSPGPGTVFVYSGRGSQWAGMGRQLLADEPAFAAAVAELEPVFVEQAGFSLHDVLANGEELVGIEQIQLGLIGMQLALTELWCSYGVRPDLVIGHSMGEVAAAVVAGALTPAEGLRVTATRSRLMAPLSGQGGMALLELDAPTTEALIADFPQVTLGIYNSPRQTVIAGPTEQIDELIARVRAQNRFASRVNIEVAPHNPAMDALQPAMRSELADLTPRTPTIGIISTTYADLHTQPVFDAEHWATNMRNPVHFQQAIASAGSGADGAYHTFIEISAHPLLTQAIIDTLHSAQPGARYTSLGTLQRDTDDVVTFRTNLNKAHTIHPPHTPHPPEPHPPIPTTPWQHTRHWITTKYPAGSVGSAPRAGTLLGQHTTVATVSASPPSHLWQARLAPDAKPYQGGHRFHQVEVVPASVVLHTILSAATELGYSALSEVRFEQPIFADRPRLIQVVADNRAISLASSPAAGTPSDRWTRHVTAQLSSSPSDSASSLNEHHRANGQPPERAHRDLIPDLAELLAMRGIDGLPFSWTVASWTQHSSNLTVAIDLPEALPEGSTGPLLDAAVHLAALSDVADSRLYVPASIEQISLGDVVTGPRSSVTLNRTAHDDDGITVDVTVAAHGEVPSLSMRSLRYRALDFGLDVGRAQPPASTGPVEAYCDATNFVHTIDWQPQTVPDATHPGAEQVTHPGPVAIIGDDSAALCETLEGAGYQPAVMSDGVSQARYVVYVADSDPAGADETDVDFAVRICTEITGLVRTLAERDADKPAALWILTRGVHESVAPSALRQSFLWGLAGVIAAEHPELWGGLVDLAINDDLGEFGPALAELLAKPSKSILVRRDGVVLAPALAPVRGEPARKSLQCRPDAAYLITGGLGALGLLMADWLADRGAHRLVLTGRTPLPPRRDWQLDTLDTELRRRIDAIRALEMRGVTVEAVAADVGCREDVQALLAARDRDGAAPIRGIIHAAGITNDQLVTSMTGDAVRQVMWPKIGGSQVLHDAFPPGSVDFFYLTASAAGIFGIPGQGSYAAANSYLDALARARRQQGCHTMSLDWVAWRGLGLAADAQLVSEELARMGSRDITPSEAFTAWEFVDGYDVAQAVVVPMPAPAGADGSGANAYLLPARNWSVMAATEVRSELEQGLRRIIAAELRVPEKELDTDRPFAELGLNSLMAMAIRREAEQFVGIELSATMLFNHPTVKSLASYLAKRVAPHDVSQDNQISALSSSAGSVLDSLFDRIESAPPEAERSV.

The 75-residue stretch at 9-83 folds into the Carrier 1 domain; the sequence is ADLRHWLIDY…ALAAYLAAPE (75 aa). Serine 43 carries the post-translational modification O-(pantetheine 4'-phosphoryl)serine. The Ketosynthase family 3 (KS3) domain occupies 101–526; sequence DEPIAVVGMG…GTNAHVVIEQ (426 aa). Catalysis depends on for beta-ketoacyl synthase activity residues cysteine 273, histidine 408, and histidine 448. The acyltransferase stretch occupies residues 626-950; sequence SPGPGTVFVY…NLNKAHTIHP (325 aa). The For malonyltransferase activity role is filled by serine 720. Positions 997 to 1112 are N-terminal hotdog fold; sequence HTTVATVSAS…AQLSSSPSDS (116 aa). Residues 997–1267 form the PKS/mFAS DH domain; the sequence is HTTVATVSAS…YRALDFGLDV (271 aa). Histidine 1027 acts as the Proton acceptor; for dehydratase activity in catalysis. Residues 1102–1130 form a disordered region; sequence TAQLSSSPSDSASSLNEHHRANGQPPERA. The segment covering 1106-1115 has biased composition (low complexity); sequence SSSPSDSASS. Residues 1130-1267 form a C-terminal hotdog fold region; that stretch reads AHRDLIPDLA…YRALDFGLDV (138 aa). The active-site Proton donor; for dehydratase activity is aspartate 1186. 1491–1551 lines the NADP(+) pocket; the sequence is AAYLITGGLG…RRRIDAIRAL (61 aa). The tract at residues 1491 to 1728 is beta-ketoacyl reductase; that stretch reads AAYLITGGLG…DGYDVAQAVV (238 aa). The Carrier 2 domain occupies 1759 to 1836; the sequence is EVRSELEQGL…SLASYLAKRV (78 aa). Serine 1796 carries the O-(pantetheine 4'-phosphoryl)serine modification.

NADP(+) serves as cofactor. The cofactor is pantetheine 4'-phosphate.

It catalyses the reaction icosanoyl-[(phenol)carboxyphthiodiolenone synthase] + 2 (S)-methylmalonyl-CoA + 3 malonyl-CoA + 5 NADPH + 10 H(+) = C32-carboxyphthiodiolenone-[(phenol)carboxyphthiodiolenone synthase] + 5 CO2 + 5 NADP(+) + 5 CoA + 2 H2O. The enzyme catalyses docosanoyl-[(phenol)carboxyphthiodiolenone synthase] + 2 (S)-methylmalonyl-CoA + 3 malonyl-CoA + 5 NADPH + 10 H(+) = C34-carboxyphthiodiolenone-[(phenol)carboxyphthiodiolenone synthase] + 5 CO2 + 5 NADP(+) + 5 CoA + 2 H2O. It carries out the reaction 17-(4-hydroxyphenyl)heptadecanoyl-[(phenol)carboxyphthiodiolenone synthase] + 2 (S)-methylmalonyl-CoA + 3 malonyl-CoA + 5 NADPH + 10 H(+) = C35-(phenol)carboxyphthiodiolenone-[(phenol)carboxyphthiodiolenone synthase] + 5 CO2 + 5 NADP(+) + 5 CoA + 2 H2O. The catalysed reaction is 19-(4-hydroxyphenyl)nonadecanoyl-[(phenol)carboxyphthiodiolenone synthase] + 2 (S)-methylmalonyl-CoA + 3 malonyl-CoA + 5 NADPH + 10 H(+) = C37-(phenol)carboxyphthiodiolenone-[(phenol)carboxyphthiodiolenone synthase] + 5 CO2 + 5 NADP(+) + 5 CoA + 2 H2O. It participates in lipid metabolism; fatty acid biosynthesis. Its function is as follows. Part of the PpsABCDE complex involved in the biosynthesis of the lipid core common to phthiocerols and phenolphthiocerols by successive additions of malonyl-CoA or methylmalonyl-CoA extender units. PpsA can accept as substrate the activated forms of either icosanoyl (C20), docosanoyl (C22) or lignoceroyl (C24) groups from FadD26, or a (4-hydroxyphenyl)-C17 or (4-hydroxyphenyl)-C19 fatty acyl from FadD29. PpsA initiates the biosynthesis and extends its substrate using a malonyl-CoA extender unit. The PpsB and PpsC proteins add the second and third malonyl-CoA extender units. PpsD adds an (R)-methylmalonyl unit and PpsE adds a second (R)-methylmalonyl unit. The incorporation of the methylmalonyl units results in formation of two branched methyl groups in the elongated product. In Mycobacterium tuberculosis (strain CDC 1551 / Oshkosh), this protein is Phenolphthiocerol/phthiocerol polyketide synthase subunit A (ppsA).